We begin with the raw amino-acid sequence, 696 residues long: Ribonucleoside-diphosphate reductase subunit beta (696 aa).

D97, E127, and H130 together coordinate Fe cation. The active site involves Y134. Fe cation-binding residues include E194 and E228. One can recognise a DOD-type homing endonuclease domain in the interval 377-507; it reads DGTIDSKRNG…FVQALCALGG (131 aa). H577 contributes to the Fe cation binding site.

This sequence belongs to the ribonucleoside diphosphate reductase small chain family. Tetramer of two alpha and two beta subunits. The cofactor is Fe cation. This protein undergoes a protein self splicing that involves a post-translational excision of the intervening region (intein) followed by peptide ligation.

The catalysed reaction is a 2'-deoxyribonucleoside 5'-diphosphate + [thioredoxin]-disulfide + H2O = a ribonucleoside 5'-diphosphate + [thioredoxin]-dithiol. Functionally, provides the precursors necessary for DNA synthesis. Catalyzes the biosynthesis of deoxyribonucleotides from the corresponding ribonucleotides. This is Ribonucleoside-diphosphate reductase subunit beta (nrdB) from Aquifex aeolicus (strain VF5).